The sequence spans 379 residues: Cytochrome b (379 aa).

4 helical membrane passes run 32–52 (FGSL…FLAM), 76–97 (WLIR…YMHI), 112–132 (WNVG…GYVL), and 177–197 (FFAF…IHLL). Heme b contacts are provided by H82 and H96. Heme b-binding residues include H181 and H195. A ubiquinone is bound at residue H200. Transmembrane regions (helical) follow at residues 225 to 245 (YKDL…ALFS), 287 to 307 (LGGV…PFLH), 319 to 339 (LTQI…WIGG), and 346 to 366 (FIII…VLSP).

This sequence belongs to the cytochrome b family. The cytochrome bc1 complex contains 3 respiratory subunits (MT-CYB, CYC1 and UQCRFS1), 2 core proteins (UQCRC1 and UQCRC2) and probably 6 low-molecular weight proteins. It depends on heme b as a cofactor.

Its subcellular location is the mitochondrion inner membrane. Component of the ubiquinol-cytochrome c reductase complex (complex III or cytochrome b-c1 complex) that is part of the mitochondrial respiratory chain. The b-c1 complex mediates electron transfer from ubiquinol to cytochrome c. Contributes to the generation of a proton gradient across the mitochondrial membrane that is then used for ATP synthesis. This Chlorophthalmus agassizi (Shortnose greeneye) protein is Cytochrome b (mt-cyb).